The primary structure comprises 288 residues: Diaminopimelate epimerase (288 aa).

Substrate-binding residues include Asn-13, Gln-46, and Asn-66. Residue Cys-75 is the Proton donor of the active site. Residues 76 to 77 (GN), Asn-166, Asn-199, and 217 to 218 (ER) each bind substrate. Cys-226 (proton acceptor) is an active-site residue. Position 227 to 228 (227 to 228 (GT)) interacts with substrate.

Belongs to the diaminopimelate epimerase family. In terms of assembly, homodimer.

The protein resides in the cytoplasm. It catalyses the reaction (2S,6S)-2,6-diaminopimelate = meso-2,6-diaminopimelate. It participates in amino-acid biosynthesis; L-lysine biosynthesis via DAP pathway; DL-2,6-diaminopimelate from LL-2,6-diaminopimelate: step 1/1. Catalyzes the stereoinversion of LL-2,6-diaminopimelate (L,L-DAP) to meso-diaminopimelate (meso-DAP), a precursor of L-lysine and an essential component of the bacterial peptidoglycan. The chain is Diaminopimelate epimerase from Cupriavidus metallidurans (strain ATCC 43123 / DSM 2839 / NBRC 102507 / CH34) (Ralstonia metallidurans).